The following is a 654-amino-acid chain: Spindle assembly abnormal protein 6 homolog (654 aa).

The region spanning 39-91 (VHRKDLVIRLTDDTDPFFLYNLVISEEDFQSLKLQQGLLVDFLAFPQKFIDLL) is the PISA domain. Residues 175–471 (TRQLHITQET…QLLKNNEKLI (297 aa)) adopt a coiled-coil conformation. Ser-509 carries the phosphoserine modification. Residues 568 to 589 (ASIDGQPGAAVNRPCSNDKENG) are disordered. Phosphoserine is present on Ser-612. Positions 634 to 644 (SKPTVLPSSSS) are enriched in low complexity. Residues 634-654 (SKPTVLPSSSSAYFPGQLPSS) are disordered. At Ser-654 the chain carries Phosphoserine.

In terms of assembly, nine homodimers form a cartwheel structure with an internal diameter of 23 nm and radial spokes connecting to the microtubule triplets. Forms a complex with CPAP and STIL. Interacts with FBXW5. Interacts with NUP62 and TUBG1 at the centrosome. Interacts with CENATAC; the interaction increases with CENATAC acetylation. Interacts with FZR1; the interaction is regulated by CENATAC and leads to SASS6 proteasomal degradation. In terms of processing, ubiquitinated by the SCF(FBXW5) E3 ubiquitin-protein ligase complex during S phase, leading to its degradation and preventing centriole reduplication. Ubiquitinated by the anaphase promoting complex/cyclosome (APC/C) E3 ubiquitin-protein ligase complex, leading to its degradation and preventing centriole reduplication.

The protein localises to the cytoplasm. It is found in the cytoskeleton. It localises to the microtubule organizing center. Its subcellular location is the centrosome. The protein resides in the centriole. Central scaffolding component of the centrioles ensuring their 9-fold symmetry. Required for centrosome biogenesis and duplication. Required both for mother-centriole-dependent centriole duplication and deuterosome-dependent centriole amplification in multiciliated cells. Not required for centriole formation in embryonic stem cells but necessary to maintain centriole architecture. Required for the recruitment of STIL to the procentriole and for STIL-mediated centriole amplification. The polypeptide is Spindle assembly abnormal protein 6 homolog (Mus musculus (Mouse)).